The primary structure comprises 156 residues: MSIRVIYPGTFDPITNGHLDLLSRACALFDHVILAIAESPNKKTLFSLNERVDLAKGATAHLNNIEVTSFHGLLIHFAQQKNIPILLRGIRSLSDFEQEWQLCHMNHRIMPELETLFLMPSEKWAFISSSLVKEIAQYRGDVSAFVPDCVKEALLR.

A substrate-binding site is contributed by threonine 10. Residues 10–11 (TF) and histidine 18 each bind ATP. The substrate site is built by lysine 42, leucine 74, and arginine 88. Residues 89 to 91 (GIR), glutamate 99, and 124 to 130 (WAFISSS) each bind ATP.

Belongs to the bacterial CoaD family. Homohexamer. Mg(2+) is required as a cofactor.

The protein localises to the cytoplasm. The enzyme catalyses (R)-4'-phosphopantetheine + ATP + H(+) = 3'-dephospho-CoA + diphosphate. The protein operates within cofactor biosynthesis; coenzyme A biosynthesis; CoA from (R)-pantothenate: step 4/5. In terms of biological role, reversibly transfers an adenylyl group from ATP to 4'-phosphopantetheine, yielding dephospho-CoA (dPCoA) and pyrophosphate. This is Phosphopantetheine adenylyltransferase from Hamiltonella defensa subsp. Acyrthosiphon pisum (strain 5AT).